The chain runs to 247 residues: Putative methyltransferase GWCH70_2453 (247 aa).

It belongs to the methyltransferase superfamily.

Functionally, may be a S-adenosyl-L-methionine (SAM)-dependent methyltransferase. In Geobacillus sp. (strain WCH70), this protein is Putative methyltransferase GWCH70_2453.